A 192-amino-acid polypeptide reads, in one-letter code: UPF0312 protein Spro_1887 (192 aa).

The N-terminal stretch at 1–23 (MLKKTVLGLTAGAMLLSAGSALA) is a signal peptide.

It belongs to the UPF0312 family. Type 1 subfamily.

It is found in the periplasm. This Serratia proteamaculans (strain 568) protein is UPF0312 protein Spro_1887.